The chain runs to 798 residues: Metabotropic glutamate receptor-like protein A (798 aa).

The N-terminal stretch at 1 to 23 is a signal peptide; it reads MNKLKFLIILFITFLFNLKYINS. The Extracellular segment spans residues 24-388; sequence LKQCKISVLL…DYSNSMKLGL (365 aa). N-linked (GlcNAc...) asparagine glycosylation is found at N186, N275, and N320. Residues 389 to 409 form a helical membrane-spanning segment; the sequence is TIVSGFCILFCIISMVLVIMF. At 410–419 the chain is on the cytoplasmic side; that stretch reads RHAKIIKSAS. A helical transmembrane segment spans residues 420-440; that stretch reads PIFCLLILFGCIIIFSGCIIF. The Extracellular segment spans residues 441–447; that stretch reads SLSPTDG. A helical membrane pass occupies residues 448 to 468; that stretch reads ICGARVWLLSIGYTIFLGSLL. Over 469-494 the chain is Cytoplasmic; it reads VKNWRIWLLFDNPKLKKRSITNWKLY. A helical membrane pass occupies residues 495–515; it reads PFVAGILAADVLILALWQGLG. Residues 516–545 lie on the Extracellular side of the membrane; the sequence is DIRSESRIGIDSLTKYQYANVCSSNDQGSV. Residues 546 to 566 form a helical membrane-spanning segment; sequence ALYILLVFHGIKLLAACFISF. The Cytoplasmic segment spans residues 567 to 580; the sequence is KIKAVDIEEFNESK. The chain crosses the membrane as a helical span at residues 581 to 601; the sequence is PIASSIYIITFCLFIVIPLMV. Over 602–609 the chain is Extracellular; that stretch reads SPQSVASQ. The chain crosses the membrane as a helical span at residues 610–630; sequence VITIVVCAIVTTLISISLLFG. At 631 to 798 the chain is on the cytoplasmic side; sequence SKFYMMATQG…NQSEIDPDDV (168 aa). A coiled-coil region spans residues 714–771; sequence AEQDSKLDLENQNDENEIENNQNNQNNIVEDCQKVEKLEKDENLEKDENLEKDENLEK. The span at 752-774 shows a compositional bias: basic and acidic residues; the sequence is EKDENLEKDENLEKDENLEKDNE. Residues 752–798 are disordered; the sequence is EKDENLEKDENLEKDENLEKDNENQSIIQKKRLSKNFNQSEIDPDDV.

The protein in the N-terminal section; belongs to the BMP lipoprotein family. In the C-terminal section; belongs to the G-protein coupled receptor 3 family. GABA-B receptor subfamily.

Its subcellular location is the membrane. The protein resides in the cytoplasm. The protein localises to the cell cortex. It localises to the perinuclear region. Functionally, may play an important role in the terminal differentiation. This is Metabotropic glutamate receptor-like protein A (grlA) from Dictyostelium discoideum (Social amoeba).